The chain runs to 1527 residues: Lysophospholipase nte1 (1527 aa).

Residues 1–73 (MADSGASVPS…SPPTPTTMVG (73 aa)) are Cytoplasmic-facing. A helical membrane pass occupies residues 74–94 (WIGWVFSLVFQTIPSVLYWVI). The Lumenal segment spans residues 95 to 116 (TFSTITLPTWLFTLFSMSLTFT). A helical transmembrane segment spans residues 117 to 137 (MNFTTLLLIVLGLVSTVSWFI). Residues 138-1527 (RYRFLNMYSR…RTLAPRRASI (1390 aa)) lie on the Cytoplasmic side of the membrane. Over residues 299–310 (GSSSSMSSVQPS) the composition is skewed to low complexity. Disordered regions lie at residues 299–387 (GSSS…RRKS), 567–596 (DQFA…QRKD), and 765–785 (ATSR…KKPS). Positions 364 to 377 (RASSYHPNGQSTAS) are enriched in polar residues. Residues 682–809 (GGTS…SYRS) and 846–966 (RLTG…IAQR) each bind a nucleoside 3',5'-cyclic phosphate. The PNPLA domain maps to 1224 to 1388 (LVLGGGGARG…IDNLTVAHMK (165 aa)). Positions 1228–1233 (GGGARG) match the GXGXXG motif. A GXSXG motif is present at residues 1255–1259 (GTSIG). Residue Ser-1257 is the Nucleophile of the active site. Asp-1375 acts as the Proton acceptor in catalysis. The DGA/G signature appears at 1375 to 1377 (DGG). A disordered region spans residues 1504 to 1527 (LPLPEENEEKKKLQRTLAPRRASI).

This sequence belongs to the NTE family.

Its subcellular location is the endoplasmic reticulum membrane. The enzyme catalyses a 1-acyl-sn-glycero-3-phosphocholine + H2O = sn-glycerol 3-phosphocholine + a fatty acid + H(+). Inhibited by organophosphorus esters. Functionally, intracellular phospholipase B that catalyzes the double deacylation of phosphatidylcholine (PC) to glycerophosphocholine (GroPCho). Plays an important role in membrane lipid homeostasis. Responsible for the rapid PC turnover in response to inositol, elevated temperatures, or when choline is present in the growth medium. This Emericella nidulans (strain FGSC A4 / ATCC 38163 / CBS 112.46 / NRRL 194 / M139) (Aspergillus nidulans) protein is Lysophospholipase nte1 (nte1).